A 388-amino-acid chain; its full sequence is Na(+)/H(+) antiporter NhaA (388 aa).

A run of 11 helical transmembrane segments spans residues 14 to 34 (GGII…MGAT), 59 to 79 (MLLW…GLEV), 95 to 115 (AFPV…YLAF), 125 to 145 (GWAI…ALLG), 154 to 174 (IFLM…IALF), 179 to 199 (LSIV…LLNL), 219 to 239 (VLKS…FIPL), 254 to 274 (VLHP…NAGV), 292 to 312 (IIAG…WLAL), 328 to 348 (IMAV…IASL), and 360 to 380 (WAKL…YSWL).

It belongs to the NhaA Na(+)/H(+) (TC 2.A.33) antiporter family.

It is found in the cell inner membrane. The catalysed reaction is Na(+)(in) + 2 H(+)(out) = Na(+)(out) + 2 H(+)(in). Its function is as follows. Na(+)/H(+) antiporter that extrudes sodium in exchange for external protons. The polypeptide is Na(+)/H(+) antiporter NhaA (Salmonella paratyphi A (strain ATCC 9150 / SARB42)).